The following is a 197-amino-acid chain: Putative methyltransferase Mtx subunit A (197 aa).

This sequence belongs to the MtrA family. May be part of a complex composed of 3 subunits; MtxA, MtxH and MtxX.

This chain is Putative methyltransferase Mtx subunit A (mtxA), found in Methanosarcina acetivorans (strain ATCC 35395 / DSM 2834 / JCM 12185 / C2A).